A 227-amino-acid chain; its full sequence is Lipoprotein-releasing system ATP-binding protein LolD (227 aa).

Residues 8-226 form the ABC transporter domain; that stretch reads IEVTNLCKSF…VVHMADGRIT (219 aa). 44 to 51 is an ATP binding site; it reads GASGAGKT.

The protein belongs to the ABC transporter superfamily. Lipoprotein translocase (TC 3.A.1.125) family. The complex is composed of two ATP-binding proteins (LolD) and two transmembrane proteins (LolC and LolE).

It localises to the cell inner membrane. In terms of biological role, part of the ABC transporter complex LolCDE involved in the translocation of mature outer membrane-directed lipoproteins, from the inner membrane to the periplasmic chaperone, LolA. Responsible for the formation of the LolA-lipoprotein complex in an ATP-dependent manner. The chain is Lipoprotein-releasing system ATP-binding protein LolD from Syntrophotalea carbinolica (strain DSM 2380 / NBRC 103641 / GraBd1) (Pelobacter carbinolicus).